A 134-amino-acid polypeptide reads, in one-letter code: DNA-directed RNA polymerase subunit omega (134 aa).

This sequence belongs to the RNA polymerase subunit omega family. In terms of assembly, the RNAP catalytic core consists of 2 alpha, 1 beta, 1 beta' and 1 omega subunit. When a sigma factor is associated with the core the holoenzyme is formed, which can initiate transcription.

The catalysed reaction is RNA(n) + a ribonucleoside 5'-triphosphate = RNA(n+1) + diphosphate. In terms of biological role, promotes RNA polymerase assembly. Latches the N- and C-terminal regions of the beta' subunit thereby facilitating its interaction with the beta and alpha subunits. This Brucella anthropi (strain ATCC 49188 / DSM 6882 / CCUG 24695 / JCM 21032 / LMG 3331 / NBRC 15819 / NCTC 12168 / Alc 37) (Ochrobactrum anthropi) protein is DNA-directed RNA polymerase subunit omega.